Consider the following 497-residue polypeptide: Pseudooxynicotine dehydrogenase (497 aa).

The tat-type signal signal peptide spans 1–43 (MANDKGDISKDGVSRRKFLGGAVIGAAAAAGVGSQILSLSATA). Residues alanine 70, glutamate 89, arginine 97, tryptophan 114, valine 286, serine 462, and isoleucine 472 each contribute to the FAD site.

The protein belongs to the flavin monoamine oxidase family. As to quaternary structure, homodimer. FAD serves as cofactor. In terms of processing, predicted to be exported by the Tat system. The position of the signal peptide cleavage has not been experimentally proven.

Its subcellular location is the periplasm. The enzyme catalyses pseudooxynicotine + 2 Fe(III)-[cytochrome c] + H2O = 4-oxo-4-(pyridin-3-yl)butanal + methylamine + 2 Fe(II)-[cytochrome c] + 2 H(+). It participates in alkaloid degradation; nicotine degradation. With respect to regulation, strongly inhibited by Ag(+), Co(2+), Cu(2+) and Hg(2+). In terms of biological role, involved in nicotine degradation. Catalyzes the deamination of pseudooxynicotine to 3-succinoylsemialdehyde-pyridine. This is Pseudooxynicotine dehydrogenase from Pseudomonas sp.